Reading from the N-terminus, the 55-residue chain is Large ribosomal subunit protein bL33 (55 aa).

This sequence belongs to the bacterial ribosomal protein bL33 family.

This Azoarcus sp. (strain BH72) protein is Large ribosomal subunit protein bL33.